Consider the following 485-residue polypeptide: MSLSVSFIFLLVASIGAVVADSENVLVLTESNFEETINGNEFVLVKFYAPWCVHCKSLAPKYDEAADLLKEEGSDIKLAKVDATENQALASKFEVRGYPTILYFKSGKPTKYTGGRATAQIVDWVKKKSGPTVTTVESVEQLEELKGKTRVVVLGYFKDAKSDAATIYNEVADSVDDAFFAVAGSAEVAAAASLNEDGVALIRTDGDDSETSTIAEAEITNTIALKQWLHAYKLSAVTEFTHESAQEIVGGDLKKFHFLIIRKSDSSFDETIAKFTEVAKKFRAKIVFVLLDVDVEENARILEFLGVDAKNTPANRIVSLADQVEKFKPQEGEDFEAFTNSYLEGKSAQDLKAQDLPEDWNALPVKVLVASNFNEIALDETKTVFVKFYAPWCGHCKQLVPVWDELAEKYESNPNVVIAKLDATLNELADVKVNSFPTLKLWPAGSSTPVDYDGDRNLEKFEEFVNKYAGSASESETASQDHEEL.

The N-terminal stretch at Met-1–Ala-20 is a signal peptide. Thioredoxin domains are found at residues Asp-21 to Gly-130 and Tyr-342 to Gly-470. 2 disulfides stabilise this stretch: Cys-52-Cys-55 and Cys-393-Cys-396. Active-site nucleophile residues include Cys-393 and Cys-396. The short motif at His-482 to Leu-485 is the Prevents secretion from ER element.

It belongs to the protein disulfide isomerase family.

Its subcellular location is the endoplasmic reticulum lumen. It catalyses the reaction Catalyzes the rearrangement of -S-S- bonds in proteins.. The protein is Protein disulfide-isomerase 1 (pdi-1) of Caenorhabditis elegans.